We begin with the raw amino-acid sequence, 350 residues long: Sterol-4-alpha-carboxylate 3-dehydrogenase ERG26, decarboxylating (350 aa).

Residues Gly-12 to Gly-18, Asp-63 to Leu-64, and Ser-85 to Ser-87 contribute to the NADP(+) site. Ser-125 and Tyr-152 together coordinate substrate. NADP(+) contacts are provided by residues Tyr-152, Lys-156, and Pro-179 to Ile-182. The Proton donor role is filled by Lys-156.

Belongs to the 3-beta-HSD family. Heterotetramer of ERG25, ERG26, ERG27 and ERG28. ERG28 acts as a scaffold to tether ERG27 and other 4,4-demethylation-related enzymes, forming a demethylation enzyme complex, in the endoplasmic reticulum.

The protein localises to the endoplasmic reticulum membrane. The enzyme catalyses 4beta-methylzymosterol-4alpha-carboxylate + NADP(+) = 3-dehydro-4-methylzymosterol + CO2 + NADPH. It functions in the pathway steroid biosynthesis; zymosterol biosynthesis; zymosterol from lanosterol: step 4/6. In terms of biological role, sterol-4-alpha-carboxylate 3-dehydrogenase; part of the third module of ergosterol biosynthesis pathway that includes the late steps of the pathway. ERG26 is a catalytic component of the C-4 demethylation complex that catalyzes the oxidative decarboxylation that results in a reduction of the 3-beta-hydroxy group at the C-3 carbon to an oxo group. The third module or late pathway involves the ergosterol synthesis itself through consecutive reactions that mainly occur in the endoplasmic reticulum (ER) membrane. Firstly, the squalene synthase ERG9 catalyzes the condensation of 2 farnesyl pyrophosphate moieties to form squalene, which is the precursor of all steroids. Squalene synthase is crucial for balancing the incorporation of farnesyl diphosphate (FPP) into sterol and nonsterol isoprene synthesis. Secondly, the squalene epoxidase ERG1 catalyzes the stereospecific oxidation of squalene to (S)-2,3-epoxysqualene, which is considered to be a rate-limiting enzyme in steroid biosynthesis. Then, the lanosterol synthase ERG7 catalyzes the cyclization of (S)-2,3 oxidosqualene to lanosterol, a reaction that forms the sterol core. In the next steps, lanosterol is transformed to zymosterol through a complex process involving various demethylation, reduction and desaturation reactions. The lanosterol 14-alpha-demethylase ERG11 (also known as CYP51) catalyzes C14-demethylation of lanosterol to produce 4,4'-dimethyl cholesta-8,14,24-triene-3-beta-ol, which is critical for ergosterol biosynthesis. The C-14 reductase ERG24 reduces the C14=C15 double bond of 4,4-dimethyl-cholesta-8,14,24-trienol to produce 4,4-dimethyl-cholesta-8,24-dienol. 4,4-dimethyl-cholesta-8,24-dienol is substrate of the C-4 demethylation complex ERG25-ERG26-ERG27 in which ERG25 catalyzes the three-step monooxygenation required for the demethylation of 4,4-dimethyl and 4alpha-methylsterols, ERG26 catalyzes the oxidative decarboxylation that results in a reduction of the 3-beta-hydroxy group at the C-3 carbon to an oxo group, and ERG27 is responsible for the reduction of the keto group on the C-3. ERG28 has a role as a scaffold to help anchor ERG25, ERG26 and ERG27 to the endoplasmic reticulum and ERG29 regulates the activity of the iron-containing C4-methylsterol oxidase ERG25. Then, the sterol 24-C-methyltransferase ERG6 catalyzes the methyl transfer from S-adenosyl-methionine to the C-24 of zymosterol to form fecosterol. The C-8 sterol isomerase ERG2 catalyzes the reaction which results in unsaturation at C-7 in the B ring of sterols and thus converts fecosterol to episterol. The sterol-C5-desaturase ERG3 then catalyzes the introduction of a C-5 double bond in the B ring to produce 5-dehydroepisterol. The C-22 sterol desaturase ERG5 further converts 5-dehydroepisterol into ergosta-5,7,22,24(28)-tetraen-3beta-ol by forming the C-22(23) double bond in the sterol side chain. Finally, ergosta-5,7,22,24(28)-tetraen-3beta-ol is substrate of the C-24(28) sterol reductase ERG4 to produce ergosterol. In Candida albicans (strain SC5314 / ATCC MYA-2876) (Yeast), this protein is Sterol-4-alpha-carboxylate 3-dehydrogenase ERG26, decarboxylating.